Here is a 245-residue protein sequence, read N- to C-terminus: Cuticle protein (245 aa).

The Chitin-binding type R&amp;R domain maps to 25–86; sequence VSYAAAPALV…TGDSKSQQES (62 aa). Residues 79-100 are disordered; that stretch reads DSKSQQESRSGDVVQGSYSVVD. 3 repeat units span residues 92-95, 108-111, and 118-121.

Functionally, component of the cuticle of African malaria mosquito. The sequence is that of Cuticle protein (Ccp84Ab) from Anopheles gambiae (African malaria mosquito).